The chain runs to 458 residues: tRNA modification GTPase MnmE (458 aa).

Residues arginine 22, glutamate 85, and arginine 124 each contribute to the (6S)-5-formyl-5,6,7,8-tetrahydrofolate site. The 160-residue stretch at 220-379 folds into the TrmE-type G domain; that stretch reads GIKTVIVGRP…LEEHISELVF (160 aa). Residue asparagine 230 participates in K(+) binding. GTP contacts are provided by residues 230–235, 249–255, and 274–277; these read NVGKSS, TEIPGTT, and DTAG. Serine 234 is a Mg(2+) binding site. K(+) is bound by residues threonine 249, isoleucine 251, and threonine 254. Residue threonine 255 participates in Mg(2+) binding. Lysine 458 provides a ligand contact to (6S)-5-formyl-5,6,7,8-tetrahydrofolate.

This sequence belongs to the TRAFAC class TrmE-Era-EngA-EngB-Septin-like GTPase superfamily. TrmE GTPase family. Homodimer. Heterotetramer of two MnmE and two MnmG subunits. The cofactor is K(+).

It localises to the cytoplasm. In terms of biological role, exhibits a very high intrinsic GTPase hydrolysis rate. Involved in the addition of a carboxymethylaminomethyl (cmnm) group at the wobble position (U34) of certain tRNAs, forming tRNA-cmnm(5)s(2)U34. The chain is tRNA modification GTPase MnmE from Natranaerobius thermophilus (strain ATCC BAA-1301 / DSM 18059 / JW/NM-WN-LF).